Consider the following 253-residue polypeptide: Probable transcriptional regulatory protein RAF_ORF0717 (253 aa).

The tract at residues 1–21 (MAGHSKFKNIQHRKGAQDKKR) is disordered.

The protein belongs to the TACO1 family.

The protein resides in the cytoplasm. The chain is Probable transcriptional regulatory protein RAF_ORF0717 from Rickettsia africae (strain ESF-5).